We begin with the raw amino-acid sequence, 77 residues long: MKEQKLIHEGLITESLPNGMFRVRLDNEDLILGYVSGRIRRSFIRILPGDRVKIEVSSYDSTRGRIIYRLRNKDSND.

An S1-like domain is found at 1–71 (MKEQKLIHEG…TRGRIIYRLR (71 aa)).

It belongs to the IF-1 family. As to quaternary structure, component of the 30S ribosomal translation pre-initiation complex which assembles on the 30S ribosome in the order IF-2 and IF-3, IF-1 and N-formylmethionyl-tRNA(fMet); mRNA recruitment can occur at any time during PIC assembly.

The protein localises to the plastid. Its subcellular location is the chloroplast. Its function is as follows. One of the essential components for the initiation of protein synthesis. Stabilizes the binding of IF-2 and IF-3 on the 30S subunit to which N-formylmethionyl-tRNA(fMet) subsequently binds. Helps modulate mRNA selection, yielding the 30S pre-initiation complex (PIC). Upon addition of the 50S ribosomal subunit IF-1, IF-2 and IF-3 are released leaving the mature 70S translation initiation complex. This Calycanthus floridus var. glaucus (Eastern sweetshrub) protein is Translation initiation factor IF-1, chloroplastic.